Reading from the N-terminus, the 518-residue chain is 2-isopropylmalate synthase (518 aa).

Residues 5-268 (IIIFDTTLRD…DTRINTQEIH (264 aa)) form the Pyruvate carboxyltransferase domain. Positions 14, 202, 204, and 238 each coordinate Mn(2+). Residues 393-518 (TLDVITSQCI…DLKLHKIAGV (126 aa)) form a regulatory domain region.

This sequence belongs to the alpha-IPM synthase/homocitrate synthase family. LeuA type 1 subfamily. Homodimer. The cofactor is Mn(2+).

It is found in the cytoplasm. It carries out the reaction 3-methyl-2-oxobutanoate + acetyl-CoA + H2O = (2S)-2-isopropylmalate + CoA + H(+). The protein operates within amino-acid biosynthesis; L-leucine biosynthesis; L-leucine from 3-methyl-2-oxobutanoate: step 1/4. Catalyzes the condensation of the acetyl group of acetyl-CoA with 3-methyl-2-oxobutanoate (2-ketoisovalerate) to form 3-carboxy-3-hydroxy-4-methylpentanoate (2-isopropylmalate). The protein is 2-isopropylmalate synthase of Pasteurella multocida (strain Pm70).